The primary structure comprises 242 residues: ATP-dependent dethiobiotin synthetase BioD (242 aa).

12–17 contributes to the ATP binding site; sequence EVGKTV. T16 is a binding site for Mg(2+). Residue K37 is part of the active site. S41 is a substrate binding site. ATP is bound by residues D51 and 112 to 115; that span reads EGAG. Mg(2+) contacts are provided by D51 and E112.

It belongs to the dethiobiotin synthetase family. Homodimer. Requires Mg(2+) as cofactor.

Its subcellular location is the cytoplasm. The enzyme catalyses (7R,8S)-7,8-diammoniononanoate + CO2 + ATP = (4R,5S)-dethiobiotin + ADP + phosphate + 3 H(+). The protein operates within cofactor biosynthesis; biotin biosynthesis; biotin from 7,8-diaminononanoate: step 1/2. In terms of biological role, catalyzes a mechanistically unusual reaction, the ATP-dependent insertion of CO2 between the N7 and N8 nitrogen atoms of 7,8-diaminopelargonic acid (DAPA, also called 7,8-diammoniononanoate) to form a ureido ring. The chain is ATP-dependent dethiobiotin synthetase BioD from Bacillus cereus (strain G9842).